Consider the following 351-residue polypeptide: Alanine racemase (351 aa).

The Proton acceptor; specific for D-alanine role is filled by K34. K34 is subject to N6-(pyridoxal phosphate)lysine. R126 contacts substrate. The Proton acceptor; specific for L-alanine role is filled by Y248. Residue M296 participates in substrate binding.

This sequence belongs to the alanine racemase family. Pyridoxal 5'-phosphate is required as a cofactor.

The enzyme catalyses L-alanine = D-alanine. It participates in amino-acid biosynthesis; D-alanine biosynthesis; D-alanine from L-alanine: step 1/1. Catalyzes the interconversion of L-alanine and D-alanine. May also act on other amino acids. The sequence is that of Alanine racemase (alr) from Deinococcus radiodurans (strain ATCC 13939 / DSM 20539 / JCM 16871 / CCUG 27074 / LMG 4051 / NBRC 15346 / NCIMB 9279 / VKM B-1422 / R1).